The sequence spans 462 residues: uncharacterized protein (462 aa).

A run of 2 helical transmembrane segments spans residues 12–32 (WWWL…APTV) and 257–277 (GLCV…LELV).

This sequence belongs to the HHV-5 US29 protein family.

It localises to the host membrane. This is an uncharacterized protein from Human cytomegalovirus (strain AD169) (HHV-5).